Consider the following 123-residue polypeptide: Nitrogen regulatory protein GlnK2 (123 aa).

ATP contacts are provided by residues 38–40 (SLT) and serine 49. Serine 49 is an ADP binding site. The residue at position 62 (tyrosine 62) is an O-UMP-tyrosine. Residues valine 75, 98–101 (GDGK), and arginine 114 each bind ATP. 98–101 (GDGK) serves as a coordination point for ADP. Residue 98–101 (GDGK) participates in AMP binding.

Belongs to the P(II) protein family. Homotrimer. Interacts with the glutamine synthetase 3 (GS3) in the presence of 2-oxoglutarate. Interacts in vitro with Amt1 after ammonium shock. May also interact with Amt2. Uridylylated on Tyr-62.

It is found in the cytoplasm. Its activity is regulated as follows. Binds the effectors ADP and ATP. Also binds AMP with high affinity, raising the possibility that AMP could be an important PII effector, at least in archaea. The change in the ATP/AMP ratio may be more relevant for describing the energy status in the cells than the ATP/ADP ratio alone. In terms of biological role, involved in the regulation of nitrogen metabolism. Regulates the activity of its targets by protein-protein interaction in response to the nitrogen status of the cell. Increases the activity of the glutamine synthetase 3 in the presence of 2-oxoglutarate. May regulate the activity of the ammonia channel Amt2 via direct interaction. The sequence is that of Nitrogen regulatory protein GlnK2 from Haloferax mediterranei (strain ATCC 33500 / DSM 1411 / JCM 8866 / NBRC 14739 / NCIMB 2177 / R-4) (Halobacterium mediterranei).